We begin with the raw amino-acid sequence, 237 residues long: Peroxisomal membrane protein 11-1 (237 aa).

The Cytoplasmic portion of the chain corresponds to methionine 1 to asparagine 92. A helical membrane pass occupies residues alanine 93–tyrosine 113. Over lysine 114–lysine 204 the chain is Lumenal. Residues isoleucine 205–tyrosine 223 form a helical membrane-spanning segment. Residues glutamine 224–alanine 237 lie on the Cytoplasmic side of the membrane.

This sequence belongs to the peroxin-11 family. In terms of tissue distribution, expressed in seedlings, leaf sheaths, flag leaf, panicles and spikelets.

The protein localises to the peroxisome membrane. Its function is as follows. Involved in peroxisomal proliferation. This chain is Peroxisomal membrane protein 11-1 (PEX11-1), found in Oryza sativa subsp. japonica (Rice).